The chain runs to 219 residues: Probable nicotinate-nucleotide adenylyltransferase (219 aa).

It belongs to the NadD family.

The enzyme catalyses nicotinate beta-D-ribonucleotide + ATP + H(+) = deamido-NAD(+) + diphosphate. The protein operates within cofactor biosynthesis; NAD(+) biosynthesis; deamido-NAD(+) from nicotinate D-ribonucleotide: step 1/1. Functionally, catalyzes the reversible adenylation of nicotinate mononucleotide (NaMN) to nicotinic acid adenine dinucleotide (NaAD). This chain is Probable nicotinate-nucleotide adenylyltransferase, found in Chromohalobacter salexigens (strain ATCC BAA-138 / DSM 3043 / CIP 106854 / NCIMB 13768 / 1H11).